The chain runs to 219 residues: 7-cyano-7-deazaguanine synthase (219 aa).

Phe10–Leu20 lines the ATP pocket. Zn(2+) contacts are provided by Cys188, Cys197, Cys200, and Cys203.

It belongs to the QueC family. In terms of assembly, homodimer. Requires Zn(2+) as cofactor.

The catalysed reaction is 7-carboxy-7-deazaguanine + NH4(+) + ATP = 7-cyano-7-deazaguanine + ADP + phosphate + H2O + H(+). It participates in purine metabolism; 7-cyano-7-deazaguanine biosynthesis. Its function is as follows. Catalyzes the ATP-dependent conversion of 7-carboxy-7-deazaguanine (CDG) to 7-cyano-7-deazaguanine (preQ(0)). This Clostridium botulinum (strain Langeland / NCTC 10281 / Type F) protein is 7-cyano-7-deazaguanine synthase.